The following is a 201-amino-acid chain: Ribonuclease HII (201 aa).

In terms of domain architecture, RNase H type-2 spans 10–200 (LIEAGCDEAG…LGDGQLELFS (191 aa)). 3 residues coordinate a divalent metal cation: Asp16, Glu17, and Asp108.

The protein belongs to the RNase HII family. It depends on Mn(2+) as a cofactor. Requires Mg(2+) as cofactor.

The protein resides in the cytoplasm. The enzyme catalyses Endonucleolytic cleavage to 5'-phosphomonoester.. Its function is as follows. Endonuclease that specifically degrades the RNA of RNA-DNA hybrids. The protein is Ribonuclease HII of Bacteroides fragilis (strain ATCC 25285 / DSM 2151 / CCUG 4856 / JCM 11019 / LMG 10263 / NCTC 9343 / Onslow / VPI 2553 / EN-2).